Reading from the N-terminus, the 398-residue chain is O-methyltransferase mpaG' (398 aa).

Ser144 contributes to the (4E,8E)-10-(4,6-dihydroxy-7-methyl-3-oxo-1,3-dihydro-2-benzofuran-5-yl)-4,8-dimethyldeca-4,8-dienoate binding site. Ser144 contributes to the 4-farnesyl-3,5-dihydroxy-6-methylphthalide binding site. Ser144 is a 6-O-desmethylmycophenolate binding site. Asn197 is a binding site for S-adenosyl-L-homocysteine. Tyr199 serves as a coordination point for (4E,8E)-10-(4,6-dihydroxy-7-methyl-3-oxo-1,3-dihydro-2-benzofuran-5-yl)-4,8-dimethyldeca-4,8-dienoate. 4-farnesyl-3,5-dihydroxy-6-methylphthalide is bound at residue Tyr199. Tyr199 lines the 6-O-desmethylmycophenolate pocket. The S-adenosyl-L-homocysteine site is built by Tyr203, Asp237, Gly239, His244, Asp245, Asp264, and Arg265. Asp264 is an S-adenosyl-L-methionine binding site. (4E,8E)-10-(4,6-dihydroxy-7-methyl-3-oxo-1,3-dihydro-2-benzofuran-5-yl)-4,8-dimethyldeca-4,8-dienoate contacts are provided by Arg265 and Gln267. A 6-O-desmethylmycophenolate-binding site is contributed by Arg265. The S-adenosyl-L-homocysteine site is built by Asp286, Ile287, and His302. Ser303 is a (4E,8E)-10-(4,6-dihydroxy-7-methyl-3-oxo-1,3-dihydro-2-benzofuran-5-yl)-4,8-dimethyldeca-4,8-dienoate binding site. Ser303 serves as a coordination point for 4-farnesyl-3,5-dihydroxy-6-methylphthalide. Ser303 is a binding site for 6-O-desmethylmycophenolate. The active-site Proton acceptor is the His306. Active-site residues include Glu335 and Glu362.

The protein belongs to the class I-like SAM-binding methyltransferase superfamily. Cation-independent O-methyltransferase family. As to quaternary structure, homodimer.

It localises to the cytoplasm. The protein localises to the cytosol. It carries out the reaction (4E,8E)-10-(4,6-dihydroxy-7-methyl-3-oxo-1,3-dihydro-2-benzofuran-5-yl)-4,8-dimethyldeca-4,8-dienoate + S-adenosyl-L-methionine = (4E,8E)-10-(4-hydroxy-6-methoxy-7-methyl-3-oxo-1,3-dihydro-2-benzofuran-5-yl)-4,8-dimethyldeca-4,8-dienoate + S-adenosyl-L-homocysteine + H(+). The catalysed reaction is 4-farnesyl-3,5-dihydroxy-6-methylphthalide + S-adenosyl-L-methionine = 4-farnesyl-3,5-dihydroxy-6-methoxylphthalide + S-adenosyl-L-homocysteine + H(+). It catalyses the reaction 6-O-desmethylmycophenolate + S-adenosyl-L-methionine = mycophenolate + S-adenosyl-L-homocysteine + H(+). Its pathway is secondary metabolite biosynthesis; terpenoid biosynthesis. O-methyltransferase; part of the gene cluster that mediates the biosynthesis of mycophenolic acid (MPA), the first isolated antibiotic natural product in the world obtained from a culture of Penicillium brevicompactum in 1893. MpaG' catalyzes the 5-O-methylation of three precursors in MPA biosynthesis including demethylmycophenolic acid (DMMPA), 4-farnesyl-3,5-dihydroxy-6-methylphthalide (FDHMP), and an intermediate containing three fewer carbon atoms compared to FDHMP (FDHMP-3C) with different catalytic efficiencies. The first step of the pathway is the synthesis of 5-methylorsellinic acid (5MOA) by the cytosolic polyketide synthase mpaC. 5MOA is then converted to the phthalide compound 5,7-dihydroxy-4,6-dimethylphthalide (DHMP) by the endoplasmic reticulum-bound cytochrome P450 monooxygenase mpaDE. MpaDE first catalyzes hydroxylation of 5-MOA to 4,6-dihydroxy-2-(hydroxymethyl)-3-methylbenzoic acid (DHMB). MpaDE then acts as a lactone synthase that catalyzes the ring closure to convert DHMB into DHMP. The next step is the prenylation of DHMP by the Golgi apparatus-associated prenyltransferase mpaA to yield farnesyl-DHMP (FDHMP). The ER-bound oxygenase mpaB then mediates the oxidative cleavage the C19-C20 double bond in FDHMP to yield FDHMP-3C via a mycophenolic aldehyde intermediate. The O-methyltransferase mpaG catalyzes the methylation of FDHMP-3C to yield MFDHMP-3C. MpaG and mpaB can also switch the order in which they act and, in this case, the conversion of FDHMP to MFDHMP-3C can take place via 5-O-methyl-FDHMP (MFDHMP). After the cytosolic methylation of FDHMP-3C, MFDHMP-3C enters into peroxisomes probably via free diffusion due to its low molecular weight. Upon a peroxisomal CoA ligation reaction, catalyzed by a beta-oxidation component enzyme acyl-CoA ligase ACL891, MFDHMP-3C-CoA would then be restricted to peroxisomes for the following beta-oxidation pathway steps. The peroxisomal beta-oxidation machinery than converts MFDHMP-3C-CoA into MPA_CoA, via a beta-oxidation chain-shortening process. Finally mpaH acts as a peroxisomal acyl-CoA hydrolase with high substrate specificity toward MPA-CoA to release the final product MPA. MpaH can also hydrolyze DMMPA-CoA to release demethylmycophenolic acid (DMMPA) that is further converted to MPA by mpaG. This is O-methyltransferase mpaG' from Penicillium brevicompactum.